Reading from the N-terminus, the 2646-residue chain is Probable helicase senataxin (2646 aa).

Position 102 is a phosphoserine (serine 102). Lysine 339 participates in a covalent cross-link: Glycyl lysine isopeptide (Lys-Gly) (interchain with G-Cter in SUMO1). Phosphoserine is present on serine 640. 2 disordered regions span residues 705–734 and 825–876; these read KISA…WGCD and GGAL…DDED. Over residues 714–727 the composition is skewed to polar residues; it reads ESSSYAPSNSTSRN. Residues 867 to 876 are compositionally biased toward acidic residues; that stretch reads LDNSSSDDED. Phosphoserine is present on residues serine 870, serine 871, serine 872, serine 938, serine 1002, and serine 1004. The interval 1001 to 1023 is disordered; it reads ISDSDEEEDEDEDERSSSEENIK. The span at 1003 to 1014 shows a compositional bias: acidic residues; that stretch reads DSDEEEDEDEDE. Residue lysine 1051 forms a Glycyl lysine isopeptide (Lys-Gly) (interchain with G-Cter in SUMO2) linkage. The span at 1122 to 1133 shows a compositional bias: basic and acidic residues; the sequence is RNKAEGVKEHAG. Residues 1122-1245 are disordered; sequence RNKAEGVKEH…DTRRGQSKSS (124 aa). Residues 1147–1156 are compositionally biased toward basic residues; sequence GVKKPKRKRY. Over residues 1176-1189 the composition is skewed to basic and acidic residues; it reads LPDRRDLTESDLKS. A compositionally biased stretch (polar residues) spans 1196–1211; the sequence is TPSSSVERDSTILQKS. Over residues 1212–1222 the composition is skewed to basic residues; the sequence is TKSRTHSKPVR. Residue serine 1318 is modified to Phosphoserine. Glycyl lysine isopeptide (Lys-Gly) (interchain with G-Cter in SUMO2) cross-links involve residues lysine 1328, lysine 1329, and lysine 1398. Serine 1472 carries the phosphoserine modification. A Phosphothreonine modification is found at threonine 1474. The disordered stretch occupies residues 1591-1627; sequence LSKSLESTTLQQSALKNKSSGAQPNLKVTPPSSMGSQ. Over residues 1595 to 1613 the composition is skewed to polar residues; it reads LESTTLQQSALKNKSSGAQ. An ATP-binding site is contributed by 1939-1946; that stretch reads GPPGTGKS. Residues 2046 to 2063 carry the Bipartite nuclear localization signal motif; the sequence is KKDLPSHIQEMLRRKEIL. Threonine 2450 carries the post-translational modification Phosphothreonine. Disordered stretches follow at residues 2450–2472, 2486–2506, and 2569–2624; these read THPP…NRLD, HTPS…QDRL, and SHRS…THHV. Composition is skewed to basic and acidic residues over residues 2496–2506 and 2593–2608; these read GPERPLLQDRL and KYSD…REPR. A necessary for nuclear localization region spans residues 2632-2646; the sequence is RRRLDDSSAKRRQFL.

Belongs to the DNA2/NAM7 helicase family. As to quaternary structure, homodimer. Interacts with PER2; the interaction inhibits termination of circadian target genes. Interacts with CHD4, POLR2A, PRKDC and TRIM28. Interacts with UBE2I. Interacts (via N-terminus domain) with EXOSC9 (via C-terminus region); the interaction enhances SETX sumoylation. Interacts with NCL (via N-terminus domain). Interacts with PABPN1, PABPC1 and SF3B1. Interacts with SMN1/SMN2 and POLR2A; SMN1/SMN2 recruits SETX to POLR2A. Ubiquitinated. In terms of processing, sumoylated preferentially with SUMO2 or SUMO3. In terms of tissue distribution, expressed in cerebellum, hippocampus, olfactory bulb, Bergmann glial fibers, stellate cells and Purkinje cells. Expressed in the epithelial cells of the lens but not in mature lens fiber cells. Expressed in the retina (highly expressed in inner and outer segments of photoreceptors and outer plexiform layer cells but weakly expressed in the inner plexiform and ganglion cell layers). Expressed in the kidney.

Its subcellular location is the nucleus. It is found in the nucleoplasm. It localises to the nucleolus. The protein localises to the cytoplasm. The protein resides in the chromosome. Its subcellular location is the telomere. It is found in the cell projection. It localises to the axon. The protein localises to the growth cone. Probable RNA/DNA helicase involved in diverse aspects of RNA metabolism and genomic integrity. Plays a role in transcription regulation by its ability to modulate RNA Polymerase II (Pol II) binding to chromatin and through its interaction with proteins involved in transcription. Contributes to the mRNA splicing efficiency and splice site selection. Required for the resolution of R-loop RNA-DNA hybrid formation at G-rich pause sites located downstream of the poly(A) site, allowing XRN2 recruitment and XRN2-mediated degradation of the downstream cleaved RNA and hence efficient RNA polymerase II (RNAp II) transcription termination. Required for the 3' transcriptional termination of PER1 and CRY2, thus playing an important role in the circadian rhythm regulation. Involved in DNA double-strand breaks damage response generated by oxidative stress. In association with RRP45, targets the RNA exosome complex to sites of transcription-induced DNA damage. Plays a role in the development and maturation of germ cells: essential for male meiosis, acting at the interface of transcription and meiotic recombination, and in the process of gene silencing during meiotic sex chromosome inactivation (MSCI). Plays a role in neurite outgrowth in hippocampal cells through FGF8-activated signaling pathways. Inhibits retinoic acid-induced apoptosis. May be involved in telomeric stability through the regulation of telomere repeat-containing RNA (TERRA) transcription. This chain is Probable helicase senataxin, found in Mus musculus (Mouse).